A 301-amino-acid polypeptide reads, in one-letter code: Haloalkane dehalogenase (301 aa).

Catalysis depends on Asp123, which acts as the Nucleophile. Catalysis depends on Asp250, which acts as the Proton donor. His279 functions as the Proton acceptor in the catalytic mechanism.

Belongs to the haloalkane dehalogenase family. Type 1 subfamily. As to quaternary structure, monomer.

The enzyme catalyses 1-haloalkane + H2O = a halide anion + a primary alcohol + H(+). In terms of biological role, catalyzes hydrolytic cleavage of carbon-halogen bonds in halogenated aliphatic compounds, leading to the formation of the corresponding primary alcohols, halide ions and protons. This chain is Haloalkane dehalogenase, found in Phenylobacterium zucineum (strain HLK1).